The chain runs to 730 residues: Catalase-peroxidase (730 aa).

The tryptophyl-tyrosyl-methioninium (Trp-Tyr) (with M-244) cross-link spans 95 to 218; that stretch reads WHSAGTYRVG…LAAVQMGLIY (124 aa). The active-site Proton acceptor is the His-96. The segment at residues 218–244 is a cross-link (tryptophyl-tyrosyl-methioninium (Tyr-Met) (with W-95)); it reads YVNPEGPNGNPDPLGSAHDVRETFARM. His-259 serves as a coordination point for heme b.

Belongs to the peroxidase family. Peroxidase/catalase subfamily. Homodimer or homotetramer. Requires heme b as cofactor. Post-translationally, formation of the three residue Trp-Tyr-Met cross-link is important for the catalase, but not the peroxidase activity of the enzyme.

It catalyses the reaction H2O2 + AH2 = A + 2 H2O. The catalysed reaction is 2 H2O2 = O2 + 2 H2O. Functionally, bifunctional enzyme with both catalase and broad-spectrum peroxidase activity. The chain is Catalase-peroxidase from Clostridium botulinum (strain Eklund 17B / Type B).